Here is an 81-residue protein sequence, read N- to C-terminus: Neurotoxin LmNaTx11.1 (81 aa).

An N-terminal signal peptide occupies residues 1–18; it reads MKIVIIFFIAMMAVGVYS. Positions 19 to 80 constitute an LCN-type CS-alpha/beta domain; sequence KDGYLVKKNG…PTYPSSKTCS (62 aa). 4 cysteine pairs are disulfide-bonded: Cys29–Cys79, Cys33–Cys56, Cys42–Cys61, and Cys46–Cys63.

This sequence belongs to the long (4 C-C) scorpion toxin superfamily. Sodium channel inhibitor family. Beta subfamily. As to expression, expressed by the venom gland.

It localises to the secreted. Binds voltage-independently at site-4 of sodium channels (Nav) and shift the voltage of activation toward more negative potentials thereby affecting sodium channel activation and promoting spontaneous and repetitive firing. The chain is Neurotoxin LmNaTx11.1 from Lychas mucronatus (Chinese swimming scorpion).